Reading from the N-terminus, the 570-residue chain is MNRIISINGPLVIAKGKFSIFEVVRVGEEKLIGEVIGIENDKAYIQVYEDTNGLKVGEPVFNTGKPLTIELGPGLLANIFDGLGRPLKDIYEKTQSIYIPKGIDLPTLDRKKVWEFIPKKKKGDTIKGGDIIGTVNENGFEHRIIVPPNVEGKIEEIYEGNFTIEETIAIVNGKPIKLYHEWPIRKPRPYKEKLDYNYPFITGTRVLDIMFPIAKGGSAAVPGPFGSGKTVLNQQIAKWADSDIVIYIGCGERGNEMTEVLEEFPKLKDPKTGKPLMYRTILIANTSNMPIAAREASIYLGATIGEYFRDQGYSVVVNADSTSRWAEALREISSRLGEIPSEEGYPAYLLRKLAEFYERSGRVRTLNDLEGSLTIIGAVSPPGGDFSEPVTQNTLRLVGALWALDSKLAYKRHYPAINYLISYTKQWEFVKKYFEELYEDVIEIREEFFAILKRESELMDIVSIVGPDALSDNEKIYLHMGRIIREGFLQQDAFDENDSYSPLEKTIELMRIIHKYYVTVKQLLGKIPLEEIEQKGIHEKIIKLRYKSLKEFREEIKAIEQEILSLLNSQ.

An ATP-binding site is contributed by 223-230 (GPFGSGKT).

Belongs to the ATPase alpha/beta chains family. As to quaternary structure, has multiple subunits with at least A(3), B(3), C, D, E, F, H, I and proteolipid K(x).

It is found in the cell membrane. It carries out the reaction ATP + H2O + 4 H(+)(in) = ADP + phosphate + 5 H(+)(out). Component of the A-type ATP synthase that produces ATP from ADP in the presence of a proton gradient across the membrane. The A chain is the catalytic subunit. The chain is A-type ATP synthase subunit A from Nanoarchaeum equitans (strain Kin4-M).